An 858-amino-acid polypeptide reads, in one-letter code: Ubiquitin carboxyl-terminal hydrolase 5 (858 aa).

Alanine 2 carries the N-acetylalanine modification. The interval 74-96 is disordered; it reads RRTRRPKEEDPATGTGDPPRKKP. Lysine 113 participates in a covalent cross-link: Glycyl lysine isopeptide (Lys-Gly) (interchain with G-Cter in SUMO). Phosphoserine is present on residues serine 149 and serine 156. The segment at 175–283 adopts a UBP-type; degenerate zinc-finger fold; that stretch reads QVSKHAFSLK…EHLSHFGIDM (109 aa). Cysteine 195 and cysteine 816 are disulfide-bonded. Zn(2+) contacts are provided by cysteine 199 and cysteine 202. A substrate-binding site is contributed by tryptophan 209. Cysteine 219 provides a ligand contact to Zn(2+). A substrate-binding site is contributed by 221 to 224; sequence RRYF. Position 232 (histidine 232) interacts with Zn(2+). Residues tyrosine 259, tyrosine 261, and aspartate 264 each contribute to the substrate site. A Phosphothreonine modification is found at threonine 292. One can recognise a USP domain in the interval 326–856; the sequence is TGIRNLGNSC…LGYIYFYQRV (531 aa). Residue cysteine 335 is the Nucleophile of the active site. Position 623 is a phosphothreonine (threonine 623). 2 UBA domains span residues 654-695 and 722-762; these read MLDE…VMSH and PPPE…IFSH. A phosphoserine mark is found at serine 779, serine 783, and serine 785. The active-site Proton acceptor is the histidine 818.

It belongs to the peptidase C19 family. Homodimer. Interacts with TRIML1. In terms of processing, ubiquitinated by SMURF1; leading to proteasomal degradation. SUMOylated at Lys-113; SUMOylation affects the interaction with Cav3.2 channels.

Its subcellular location is the cytoplasm. The protein localises to the stress granule. It localises to the nucleus. The catalysed reaction is Thiol-dependent hydrolysis of ester, thioester, amide, peptide and isopeptide bonds formed by the C-terminal Gly of ubiquitin (a 76-residue protein attached to proteins as an intracellular targeting signal).. Functionally, deubiquitinating enzyme that participates in a wide range of cellular processes by specifically cleaving isopeptide bonds between ubiquitin and substrate proteins or ubiquitin itself. Affects thereby important cellular signaling pathways such as NF-kappa-B, Wnt/beta-catenin, and cytokine production by regulating ubiquitin-dependent protein degradation. Participates in the activation of the Wnt signaling pathway by promoting FOXM1 deubiquitination and stabilization that induces the recruitment of beta-catenin to Wnt target gene promoter. Regulates the assembly and disassembly of heat-induced stress granules by mediating the hydrolysis of unanchored ubiquitin chains. Promotes lipopolysaccharide-induced apoptosis and inflammatory response by stabilizing the TXNIP protein. Affects T-cell biology by stabilizing the inhibitory receptor on T-cells PDC1. Acts as a negative regulator of autophagy by regulating ULK1 at both protein and mRNA levels. Acts also as a negative regulator of type I interferon production by simultaneously removing both 'Lys-48'-linked unanchored and 'Lys-63'-linked anchored polyubiquitin chains on the transcription factor IRF3. Modulates the stability of DNA mismatch repair protein MLH1 and counteracts the effect of the ubiquitin ligase UBR4. Upon activation by insulin, it gets phosphorylated through mTORC1-mediated phosphorylation to enhance YTHDF1 stability by removing 'Lys-11'-linked polyubiquitination. May also deubiquitinate other substrates such as the calcium channel CACNA1H. The sequence is that of Ubiquitin carboxyl-terminal hydrolase 5 (USP5) from Homo sapiens (Human).